The following is a 1224-amino-acid chain: Tyrosine-protein kinase abl-1 (1224 aa).

The 74-residue stretch at 115–188 folds into the SH3 domain; sequence SSAPLFVALY…PSNFIAPYNS (74 aa). An SH2 domain is found at 194-284; the sequence is WYHGKISRSD…GLICLLMYPA (91 aa). One can recognise a Protein kinase domain in the interval 311 to 562; the sequence is IIMHNKLGGG…PRFRDIHFNL (252 aa). ATP contacts are provided by residues 317–325, lysine 340, and 385–391; these read LGGGQYGDV and EFMCNGN. Residue aspartate 432 is the Proton acceptor of the active site. The short motif at 450–474 is the Kinase activation loop element; sequence DFGLARFMKEDTYTAHAGAKFPIKW. Basic and acidic residues predominate over residues 579-620; the sequence is LKKNNDKKLESDKRRSNVRERSDSKSRHSSHHDRDRDRESLH. Disordered regions lie at residues 579 to 671, 736 to 775, 796 to 881, 914 to 937, and 968 to 1016; these read LKKN…NTKP, KEST…STYV, KRSE…DVGM, LRHV…ATDN, and RPFS…RSNG. Polar residues-rich tracts occupy residues 639–655 and 746–760; these read SVSF…TSFR and AGSS…NDSL. 2 stretches are compositionally biased toward basic and acidic residues: residues 797–819 and 864–877; these read RSET…KSEK and PDSK…ETTK. Polar residues predominate over residues 973–984; it reads QCPNNSTSSAIS. Over residues 1001 to 1016 the composition is skewed to basic and acidic residues; it reads YEERMKPELPRKRSNG.

Belongs to the protein kinase superfamily. Tyr protein kinase family. ABL subfamily. As to quaternary structure, interacts (via SH2 and SH3 domains) with mig-13; the interaction is direct. May interact with soem-1.

Its subcellular location is the cell membrane. It localises to the cytoplasm. The enzyme catalyses L-tyrosyl-[protein] + ATP = O-phospho-L-tyrosyl-[protein] + ADP + H(+). In terms of biological role, functions downstream of migratory protein mig-13 and is involved in Q neuroblast migration during larval development. Recruited by mig-13 to the leading edge of Q neuroblasts and their descendents to signal downstream, likely to the wve-1 pathway, and direct migration along the anteroposterior body axis. Promotes germline cell apoptosis in response to oxidative, osmotic and heat shock stresses. The sequence is that of Tyrosine-protein kinase abl-1 (abl-1) from Caenorhabditis elegans.